A 158-amino-acid chain; its full sequence is Acetolactate synthase small subunit (158 aa).

The 76-residue stretch at 4 to 79 (MIIAKLHNVT…DVIEVADITD (76 aa)) folds into the ACT domain.

The protein belongs to the acetolactate synthase small subunit family. In terms of assembly, dimer of large and small chains.

The enzyme catalyses 2 pyruvate + H(+) = (2S)-2-acetolactate + CO2. Its pathway is amino-acid biosynthesis; L-isoleucine biosynthesis; L-isoleucine from 2-oxobutanoate: step 1/4. The protein operates within amino-acid biosynthesis; L-valine biosynthesis; L-valine from pyruvate: step 1/4. In Lactococcus lactis subsp. lactis (strain IL1403) (Streptococcus lactis), this protein is Acetolactate synthase small subunit (ilvH).